We begin with the raw amino-acid sequence, 277 residues long: uncharacterized protein (277 aa).

Helical transmembrane passes span 23–43, 61–81, 117–137, 144–164, 197–217, 221–241, and 243–263; these read CIGG…TAFI, FLIY…IIGG, LVLL…FGIF, IIGA…VISL, YIIL…IVVL, IIDI…IIYI, and IKGI…VFSI.

To M.jannaschii MJ1189.

The protein resides in the cell membrane. This is an uncharacterized protein from Methanocaldococcus jannaschii (strain ATCC 43067 / DSM 2661 / JAL-1 / JCM 10045 / NBRC 100440) (Methanococcus jannaschii).